The following is a 367-amino-acid chain: Putative transport protein MT0215 (367 aa).

A run of 9 helical transmembrane segments spans residues 18 to 38 (AAWA…LWVL), 41 to 61 (FEVI…LVPP), 74 to 94 (VAVT…LTFV), 161 to 181 (ITEL…FLYG), 228 to 248 (AGVG…LASL), 249 to 269 (VFFG…LAVV), 270 to 290 (VALL…LIAV), 314 to 334 (VVLA…LLAV), and 337 to 357 (VAFF…ADVA).

This sequence belongs to the autoinducer-2 exporter (AI-2E) (TC 2.A.86) family.

The protein resides in the cell membrane. The protein is Putative transport protein MT0215 of Mycobacterium tuberculosis (strain CDC 1551 / Oshkosh).